Reading from the N-terminus, the 345-residue chain is uncharacterized protein (345 aa).

The protein belongs to the methyltransferase superfamily.

This is an uncharacterized protein from Streptomyces fradiae (Streptomyces roseoflavus).